A 752-amino-acid polypeptide reads, in one-letter code: Protein WEAK CHLOROPLAST MOVEMENT UNDER BLUE LIGHT-like 2 (752 aa).

At Ser143 the chain carries Phosphoserine. Coiled-coil stretches lie at residues 186-557 (ERRK…SRAS) and 596-651 (ELSK…KEAM). A disordered region spans residues 476-495 (KHDLSETRQRNREDTREEKC). A compositionally biased stretch (basic and acidic residues) spans 653–675 (KVEKARDGKVGMDHELRKWRSDN). The tract at residues 653 to 733 (KVEKARDGKV…ETETKKKKKR (81 aa)) is disordered. Residues 690–723 (KSKSALHQPTTFTFGEQASSSNVTPQASSSNVTP) are compositionally biased toward polar residues.

The protein belongs to the WEB family.

The polypeptide is Protein WEAK CHLOROPLAST MOVEMENT UNDER BLUE LIGHT-like 2 (WEL2) (Arabidopsis thaliana (Mouse-ear cress)).